The following is a 347-amino-acid chain: 3-isopropylmalate dehydrogenase (347 aa).

Residues Arg87, Arg97, Arg121, and Asp212 each contribute to the substrate site. Residues Asp212, Asp236, and Asp240 each coordinate Mg(2+). 272 to 284 is a binding site for NAD(+); the sequence is GSAPDIAGQGTAD.

The protein belongs to the isocitrate and isopropylmalate dehydrogenases family. LeuB type 2 subfamily. Homodimer. The cofactor is Mg(2+). Mn(2+) is required as a cofactor.

It is found in the cytoplasm. The catalysed reaction is (2R,3S)-3-isopropylmalate + NAD(+) = 4-methyl-2-oxopentanoate + CO2 + NADH. Its pathway is amino-acid biosynthesis; L-leucine biosynthesis; L-leucine from 3-methyl-2-oxobutanoate: step 3/4. In terms of biological role, catalyzes the oxidation of 3-carboxy-2-hydroxy-4-methylpentanoate (3-isopropylmalate) to 3-carboxy-4-methyl-2-oxopentanoate. The product decarboxylates to 4-methyl-2 oxopentanoate. This is 3-isopropylmalate dehydrogenase from Saccharopolyspora erythraea (strain ATCC 11635 / DSM 40517 / JCM 4748 / NBRC 13426 / NCIMB 8594 / NRRL 2338).